A 473-amino-acid chain; its full sequence is ATP synthase subunit beta (473 aa).

Residue Gly156–Thr163 participates in ATP binding.

This sequence belongs to the ATPase alpha/beta chains family. As to quaternary structure, F-type ATPases have 2 components, CF(1) - the catalytic core - and CF(0) - the membrane proton channel. CF(1) has five subunits: alpha(3), beta(3), gamma(1), delta(1), epsilon(1). CF(0) has three main subunits: a(1), b(2) and c(9-12). The alpha and beta chains form an alternating ring which encloses part of the gamma chain. CF(1) is attached to CF(0) by a central stalk formed by the gamma and epsilon chains, while a peripheral stalk is formed by the delta and b chains.

Its subcellular location is the cell inner membrane. It catalyses the reaction ATP + H2O + 4 H(+)(in) = ADP + phosphate + 5 H(+)(out). Produces ATP from ADP in the presence of a proton gradient across the membrane. The catalytic sites are hosted primarily by the beta subunits. This is ATP synthase subunit beta from Desulfovibrio desulfuricans (strain ATCC 27774 / DSM 6949 / MB).